Here is a 438-residue protein sequence, read N- to C-terminus: UDP-N-acetylmuramate--L-alanine ligase (438 aa).

108 to 114 contacts ATP; that stretch reads GAHGKTS.

It belongs to the MurCDEF family.

It is found in the cytoplasm. It carries out the reaction UDP-N-acetyl-alpha-D-muramate + L-alanine + ATP = UDP-N-acetyl-alpha-D-muramoyl-L-alanine + ADP + phosphate + H(+). It participates in cell wall biogenesis; peptidoglycan biosynthesis. Cell wall formation. The sequence is that of UDP-N-acetylmuramate--L-alanine ligase from Oceanobacillus iheyensis (strain DSM 14371 / CIP 107618 / JCM 11309 / KCTC 3954 / HTE831).